A 524-amino-acid polypeptide reads, in one-letter code: Thermosome subunit 3 (524 aa).

Belongs to the TCP-1 chaperonin family. As to quaternary structure, the thermosome or CCT complex is a oligomeric complex of two octameric double-ring structures; the complex is probably a heterooligomer of CCT1, CCT2 and CCT3 with yet unknown stoichiometry.

Its function is as follows. Molecular chaperone that assists in the folding or refolding of nascent or denatured proteins along with ATP hydrolysis. ATPase activity is highest in thermosome assemblies containing CCT1:CCT2, followed by assemblies containing CCT1:CCT2:CCT3. Not required for thermosome ATPase activity. Not required for growth. This is Thermosome subunit 3 (cct3) from Haloferax volcanii (strain ATCC 29605 / DSM 3757 / JCM 8879 / NBRC 14742 / NCIMB 2012 / VKM B-1768 / DS2) (Halobacterium volcanii).